Reading from the N-terminus, the 766-residue chain is Phosphoribosylformylglycinamidine synthase subunit PurL (766 aa).

H66 is an active-site residue. Y69 and K113 together coordinate ATP. E115 lines the Mg(2+) pocket. Substrate-binding positions include 116 to 119 and R138; that span reads SHNH. Catalysis depends on H117, which acts as the Proton acceptor. D139 contributes to the Mg(2+) binding site. Q264 provides a ligand contact to substrate. Mg(2+) is bound at residue D292. 336-338 contributes to the substrate binding site; that stretch reads ESQ. N524 and G561 together coordinate ATP. N562 contributes to the Mg(2+) binding site. S564 is a substrate binding site.

It belongs to the FGAMS family. Monomer. Part of the FGAM synthase complex composed of 1 PurL, 1 PurQ and 2 PurS subunits.

The protein resides in the cytoplasm. It catalyses the reaction N(2)-formyl-N(1)-(5-phospho-beta-D-ribosyl)glycinamide + L-glutamine + ATP + H2O = 2-formamido-N(1)-(5-O-phospho-beta-D-ribosyl)acetamidine + L-glutamate + ADP + phosphate + H(+). It participates in purine metabolism; IMP biosynthesis via de novo pathway; 5-amino-1-(5-phospho-D-ribosyl)imidazole from N(2)-formyl-N(1)-(5-phospho-D-ribosyl)glycinamide: step 1/2. Functionally, part of the phosphoribosylformylglycinamidine synthase complex involved in the purines biosynthetic pathway. Catalyzes the ATP-dependent conversion of formylglycinamide ribonucleotide (FGAR) and glutamine to yield formylglycinamidine ribonucleotide (FGAM) and glutamate. The FGAM synthase complex is composed of three subunits. PurQ produces an ammonia molecule by converting glutamine to glutamate. PurL transfers the ammonia molecule to FGAR to form FGAM in an ATP-dependent manner. PurS interacts with PurQ and PurL and is thought to assist in the transfer of the ammonia molecule from PurQ to PurL. The protein is Phosphoribosylformylglycinamidine synthase subunit PurL of Mycobacterium bovis (strain BCG / Pasteur 1173P2).